A 123-amino-acid chain; its full sequence is Large ribosomal subunit protein uL14 (123 aa).

Belongs to the universal ribosomal protein uL14 family. In terms of assembly, part of the 50S ribosomal subunit. Forms a cluster with proteins L3 and L19. In the 70S ribosome, L14 and L19 interact and together make contacts with the 16S rRNA in bridges B5 and B8.

In terms of biological role, binds to 23S rRNA. Forms part of two intersubunit bridges in the 70S ribosome. The protein is Large ribosomal subunit protein uL14 of Wigglesworthia glossinidia brevipalpis.